Reading from the N-terminus, the 209-residue chain is Large ribosomal subunit protein uL3 (209 aa).

Residue Q150 is modified to N5-methylglutamine.

Belongs to the universal ribosomal protein uL3 family. Part of the 50S ribosomal subunit. Forms a cluster with proteins L14 and L19. Post-translationally, methylated by PrmB.

Functionally, one of the primary rRNA binding proteins, it binds directly near the 3'-end of the 23S rRNA, where it nucleates assembly of the 50S subunit. The protein is Large ribosomal subunit protein uL3 of Vibrio cholerae serotype O1 (strain ATCC 39541 / Classical Ogawa 395 / O395).